We begin with the raw amino-acid sequence, 406 residues long: Imidazolonepropionase (406 aa).

Residues His-75 and His-77 each contribute to the Fe(3+) site. Zn(2+)-binding residues include His-75 and His-77. Positions 84, 147, and 180 each coordinate 4-imidazolone-5-propanoate. Residue Tyr-147 coordinates N-formimidoyl-L-glutamate. His-245 provides a ligand contact to Fe(3+). A Zn(2+)-binding site is contributed by His-245. A 4-imidazolone-5-propanoate-binding site is contributed by Gln-248. Asp-320 is a Fe(3+) binding site. Asp-320 is a binding site for Zn(2+). Residues Asn-322 and Gly-324 each contribute to the N-formimidoyl-L-glutamate site. Thr-325 contributes to the 4-imidazolone-5-propanoate binding site.

It belongs to the metallo-dependent hydrolases superfamily. HutI family. The cofactor is Zn(2+). Requires Fe(3+) as cofactor.

The protein resides in the cytoplasm. It carries out the reaction 4-imidazolone-5-propanoate + H2O = N-formimidoyl-L-glutamate. It participates in amino-acid degradation; L-histidine degradation into L-glutamate; N-formimidoyl-L-glutamate from L-histidine: step 3/3. In terms of biological role, catalyzes the hydrolytic cleavage of the carbon-nitrogen bond in imidazolone-5-propanoate to yield N-formimidoyl-L-glutamate. It is the third step in the universal histidine degradation pathway. This is Imidazolonepropionase from Hyphomonas neptunium (strain ATCC 15444).